Reading from the N-terminus, the 427-residue chain is Serine hydroxymethyltransferase (427 aa).

Residues leucine 118 and 122-124 (GHL) contribute to the (6S)-5,6,7,8-tetrahydrofolate site. N6-(pyridoxal phosphate)lysine is present on lysine 227. Residue 351–353 (SPF) coordinates (6S)-5,6,7,8-tetrahydrofolate.

Belongs to the SHMT family. Homodimer. The cofactor is pyridoxal 5'-phosphate.

The protein resides in the cytoplasm. The catalysed reaction is (6R)-5,10-methylene-5,6,7,8-tetrahydrofolate + glycine + H2O = (6S)-5,6,7,8-tetrahydrofolate + L-serine. It participates in one-carbon metabolism; tetrahydrofolate interconversion. The protein operates within amino-acid biosynthesis; glycine biosynthesis; glycine from L-serine: step 1/1. Catalyzes the reversible interconversion of serine and glycine with tetrahydrofolate (THF) serving as the one-carbon carrier. This reaction serves as the major source of one-carbon groups required for the biosynthesis of purines, thymidylate, methionine, and other important biomolecules. Also exhibits THF-independent aldolase activity toward beta-hydroxyamino acids, producing glycine and aldehydes, via a retro-aldol mechanism. This is Serine hydroxymethyltransferase from Thermotoga petrophila (strain ATCC BAA-488 / DSM 13995 / JCM 10881 / RKU-1).